Here is a 298-residue protein sequence, read N- to C-terminus: uncharacterized protein (298 aa).

The protein localises to the cytoplasm. Its subcellular location is the nucleus. This is an uncharacterized protein from Schizosaccharomyces pombe (strain 972 / ATCC 24843) (Fission yeast).